A 39-amino-acid polypeptide reads, in one-letter code: Cytochrome b559 subunit beta (39 aa).

A helical membrane pass occupies residues 14–30 (WLAVHGLAVPTVFFLGS). H18 contacts heme.

This sequence belongs to the PsbE/PsbF family. Heterodimer of an alpha subunit and a beta subunit. PSII is composed of 1 copy each of membrane proteins PsbA, PsbB, PsbC, PsbD, PsbE, PsbF, PsbH, PsbI, PsbJ, PsbK, PsbL, PsbM, PsbT, PsbX, PsbY, PsbZ, Psb30/Ycf12, at least 3 peripheral proteins of the oxygen-evolving complex and a large number of cofactors. It forms dimeric complexes. Heme b serves as cofactor.

The protein localises to the plastid membrane. This b-type cytochrome is tightly associated with the reaction center of photosystem II (PSII). PSII is a light-driven water:plastoquinone oxidoreductase that uses light energy to abstract electrons from H(2)O, generating O(2) and a proton gradient subsequently used for ATP formation. It consists of a core antenna complex that captures photons, and an electron transfer chain that converts photonic excitation into a charge separation. This is Cytochrome b559 subunit beta from Cuscuta europaea (European dodder).